We begin with the raw amino-acid sequence, 318 residues long: Deoxyribose-phosphate aldolase (318 aa).

The Proton donor/acceptor role is filled by Asp155. Lys218 serves as the catalytic Schiff-base intermediate with acetaldehyde. Residue Lys254 is the Proton donor/acceptor of the active site.

The protein belongs to the DeoC/FbaB aldolase family. DeoC type 2 subfamily. As to quaternary structure, interacts with YBX1.

It localises to the cytoplasm. It is found in the cytoplasmic granule. Its subcellular location is the nucleus. The enzyme catalyses 2-deoxy-D-ribose 5-phosphate = D-glyceraldehyde 3-phosphate + acetaldehyde. It participates in carbohydrate degradation; 2-deoxy-D-ribose 1-phosphate degradation; D-glyceraldehyde 3-phosphate and acetaldehyde from 2-deoxy-alpha-D-ribose 1-phosphate: step 2/2. Its function is as follows. Catalyzes a reversible aldol reaction between acetaldehyde and D-glyceraldehyde 3-phosphate to generate 2-deoxy-D-ribose 5-phosphate. Participates in stress granule (SG) assembly. May allow ATP production from extracellular deoxyinosine in conditions of energy deprivation. The polypeptide is Deoxyribose-phosphate aldolase (DERA) (Bos taurus (Bovine)).